The primary structure comprises 179 residues: Hypoxanthine phosphoribosyltransferase (179 aa).

Diphosphate is bound by residues Arg45 and Gly46. Glu101 contributes to the GMP binding site. Residue Glu101 coordinates IMP. Mg(2+) is bound by residues Glu101 and Asp102. Catalysis depends on Asp105, which acts as the Proton acceptor. Residues 105 to 110 (DTGYTL), Lys133, and Asp161 each bind GMP. IMP is bound by residues 105–110 (DTGYTL) and Lys133. Arg167 is a binding site for diphosphate.

Belongs to the purine/pyrimidine phosphoribosyltransferase family. In terms of assembly, homotetramer. Mg(2+) is required as a cofactor.

It is found in the cytoplasm. The enzyme catalyses IMP + diphosphate = hypoxanthine + 5-phospho-alpha-D-ribose 1-diphosphate. It carries out the reaction GMP + diphosphate = guanine + 5-phospho-alpha-D-ribose 1-diphosphate. The protein operates within purine metabolism; IMP biosynthesis via salvage pathway; IMP from hypoxanthine: step 1/1. Its function is as follows. Purine salvage pathway enzyme which catalyzes the transfer of the ribosyl-5-phosphate group from 5-phospho-alpha-D-ribose 1-diphosphate (PRPP) to the N9 position of hypoxanthine to yield IMP (inosine 5'-monophosphate). To a lesser extent, can also act on guanine leading to GMP, but shows a highly less efficient activity with xanthine. The sequence is that of Hypoxanthine phosphoribosyltransferase (hpt) from Haemophilus influenzae (strain ATCC 51907 / DSM 11121 / KW20 / Rd).